Here is a 526-residue protein sequence, read N- to C-terminus: Peptide chain release factor 3 (526 aa).

The tr-type G domain maps to 9 to 277 (DKRRTFAIIS…GIVEWAPIPQ (269 aa)). GTP-binding positions include 18–25 (SHPDAGKT), 86–90 (DTPGH), and 140–143 (NKLD).

This sequence belongs to the TRAFAC class translation factor GTPase superfamily. Classic translation factor GTPase family. PrfC subfamily.

The protein localises to the cytoplasm. Its function is as follows. Increases the formation of ribosomal termination complexes and stimulates activities of RF-1 and RF-2. It binds guanine nucleotides and has strong preference for UGA stop codons. It may interact directly with the ribosome. The stimulation of RF-1 and RF-2 is significantly reduced by GTP and GDP, but not by GMP. The protein is Peptide chain release factor 3 of Shewanella halifaxensis (strain HAW-EB4).